The chain runs to 107 residues: UPF0102 protein Tlet_0667 (107 aa).

The protein belongs to the UPF0102 family.

The protein is UPF0102 protein Tlet_0667 of Pseudothermotoga lettingae (strain ATCC BAA-301 / DSM 14385 / NBRC 107922 / TMO) (Thermotoga lettingae).